Here is a 187-residue protein sequence, read N- to C-terminus: uncharacterized protein (187 aa).

The N-myristoyl glycine; by host moiety is linked to residue glycine 2.

The protein belongs to the mimivirus L332/L333/L334 family.

This is an uncharacterized protein from Acanthamoeba polyphaga (Amoeba).